A 288-amino-acid polypeptide reads, in one-letter code: Quinate/shikimate dehydrogenase (288 aa).

K71 and D107 together coordinate substrate. Residues A132–A135, N155–D158, K205, C232–N235, and G255 contribute to the NAD(+) site.

It belongs to the shikimate dehydrogenase family. Homodimer.

It catalyses the reaction L-quinate + NAD(+) = 3-dehydroquinate + NADH + H(+). The catalysed reaction is L-quinate + NADP(+) = 3-dehydroquinate + NADPH + H(+). The enzyme catalyses shikimate + NADP(+) = 3-dehydroshikimate + NADPH + H(+). It carries out the reaction shikimate + NAD(+) = 3-dehydroshikimate + NADH + H(+). It functions in the pathway metabolic intermediate biosynthesis; chorismate biosynthesis; chorismate from D-erythrose 4-phosphate and phosphoenolpyruvate: step 4/7. Functionally, the actual biological function of YdiB remains unclear, nor is it known whether 3-dehydroshikimate or quinate represents the natural substrate. Catalyzes the reversible NAD-dependent reduction of both 3-dehydroshikimate (DHSA) and 3-dehydroquinate to yield shikimate (SA) and quinate, respectively. It can use both NAD or NADP for catalysis, however it has higher catalytic efficiency with NAD. The polypeptide is Quinate/shikimate dehydrogenase (Escherichia coli O1:K1 / APEC).